We begin with the raw amino-acid sequence, 546 residues long: Serine/threonine-protein kinase Chk2 (546 aa).

Positions 1 to 70 (MKSHHQSHSS…SSHSSSGTLS (70 aa)) are disordered. A compositionally biased stretch (low complexity) spans 8-70 (HSSTSSKAHD…SSHSSSGTLS (63 aa)). At T68 the chain carries Phosphothreonine; by MAP3K20. S71 bears the Phosphoserine; by PLK3 mark. Position 77 is a phosphothreonine; by ATM and MAP3K20 (T77). A Phosphoserine; by PLK3 modification is found at S82. In terms of domain architecture, FHA spans 117–179 (YWFGRDKSCE…NGTFVNTELI (63 aa)). Residues 224 to 490 (YIMSKTLGSG…TEEALNHPWL (267 aa)) form the Protein kinase domain. ATP-binding positions include 231-238 (GSGACGEV), K253, and 306-312 (ELMEGGE). The Proton acceptor role is filled by D351. ATP is bound by residues 355-356 (EN) and D372. The interval 372-398 (DFGQSKILGETSLMRTLCGTPTYLAPE) is T-loop/activation segment. S383 bears the Phosphoserine; by autocatalysis mark. T387 and T391 each carry phosphothreonine; by autocatalysis. S460 is modified (phosphoserine).

The protein belongs to the protein kinase superfamily. CAMK Ser/Thr protein kinase family. CHK2 subfamily. In terms of assembly, homodimer. Homodimerization is part of the activation process but the dimer may dissociate following activation. Interacts with PML. Interacts with TP53. Interacts with RB1; phosphorylates RB1. Interacts with BRCA1. Interacts (phosphorylated at Thr-68) with MDC1; requires ATM-mediated phosphorylation of CHEK2. Interacts with TP53BP1; modulates CHEK2 phosphorylation at Thr-68 in response to ionizing radiation. Interacts with CDC25A; phosphorylates CDC25A and mediates its degradation in response to ionizing radiation. Interacts with CUL1; mediates CHEK2 ubiquitination and regulation. Interacts with CDKN2AIP. Interacts (via protein kinase domain) with CCAR2 (via N-terminus). Interacts with SIRT1. The cofactor is Mg(2+). Post-translationally, phosphorylated. Phosphorylated at Ser-82 by PLK3 in response to DNA damage, promoting phosphorylation at Thr-77 by ATM and the G2/M transition checkpoint. Phosphorylation at Thr-77 induces homodimerization. Autophosphorylates at Thr-387 and Thr-391 in the T-loop/activation segment upon dimerization to become fully active. DNA damage-induced autophosphorylation at Ser-383 induces CUL1-mediated ubiquitination and regulates the pro-apoptotic function. Phosphorylation at Ser-460 also regulates ubiquitination. Phosphorylated by PLK4. In terms of processing, ubiquitinated. CUL1-mediated ubiquitination regulates the pro-apoptotic function. Ubiquitination may also regulate protein stability. Ubiquitinated by RNF8 via 'Lys-48'-linked ubiquitination. As to expression, ubiquitously expressed with higher levels in the thymus, spleen and colon (at protein level).

It localises to the nucleus. The protein resides in the PML body. The protein localises to the nucleoplasm. The catalysed reaction is L-seryl-[protein] + ATP = O-phospho-L-seryl-[protein] + ADP + H(+). It catalyses the reaction L-threonyl-[protein] + ATP = O-phospho-L-threonyl-[protein] + ADP + H(+). With respect to regulation, activated through phosphorylation at Thr-68 by ATM in response to DNA double-strand breaks. Activation is modulated by several mediators including MDC1 and TP53BP1. Induces homodimerization with exchange of the T-loop/activation segment between protomers and transphosphorylation of the protomers. The autophosphorylated kinase dimer is fully active. Negatively regulated by PPM1D through dephosphorylation of Thr-68. Serine/threonine-protein kinase which is required for checkpoint-mediated cell cycle arrest, activation of DNA repair and apoptosis in response to the presence of DNA double-strand breaks. May also negatively regulate cell cycle progression during unperturbed cell cycles. Following activation, phosphorylates numerous effectors preferentially at the consensus sequence [L-X-R-X-X-S/T]. Regulates cell cycle checkpoint arrest through phosphorylation of CDC25A, CDC25B and CDC25C, inhibiting their activity. Inhibition of CDC25 phosphatase activity leads to increased inhibitory tyrosine phosphorylation of CDK-cyclin complexes and blocks cell cycle progression. May also phosphorylate NEK6 which is involved in G2/M cell cycle arrest. Regulates DNA repair through phosphorylation of BRCA2, enhancing the association of RAD51 with chromatin which promotes DNA repair by homologous recombination. Also stimulates the transcription of genes involved in DNA repair (including BRCA2) through the phosphorylation and activation of the transcription factor FOXM1. Regulates apoptosis through the phosphorylation of p53/TP53, MDM4 and PML. Phosphorylation of p53/TP53 at 'Ser-20' by CHEK2 may alleviate inhibition by MDM2, leading to accumulation of active p53/TP53. Phosphorylation of MDM4 may also reduce degradation of p53/TP53. Also controls the transcription of pro-apoptotic genes through phosphorylation of the transcription factor E2F1. Tumor suppressor, it may also have a DNA damage-independent function in mitotic spindle assembly by phosphorylating BRCA1. Its absence may be a cause of the chromosomal instability observed in some cancer cells. Promotes the CCAR2-SIRT1 association and is required for CCAR2-mediated SIRT1 inhibition. Under oxidative stress, promotes ATG7 ubiquitination by phosphorylating the E3 ubiquitin ligase TRIM32 at 'Ser-56' leading to positive regulation of the autophagosme assembly. The polypeptide is Serine/threonine-protein kinase Chk2 (Mus musculus (Mouse)).